The following is a 184-amino-acid chain: Photosystem I assembly protein Ycf4 (184 aa).

2 helical membrane-spanning segments follow: residues 21–43 (NFCW…ISSY) and 58–80 (LFFP…SSYL).

Belongs to the Ycf4 family.

The protein localises to the plastid. Its subcellular location is the chloroplast thylakoid membrane. In terms of biological role, seems to be required for the assembly of the photosystem I complex. The protein is Photosystem I assembly protein Ycf4 of Carpobrotus chilensis (Sea fig).